The chain runs to 239 residues: MAFRIDILTLFPDMFNIFNHSIMGKALEKDIININTINIRDFTEDKHKKVDDYPYGGGAGMVMSLQPIVDSLKRVKESNRGKVIFLGPRGKTFSHEMAKELSKEEELIFLCGHYEGIDERCYDYIDLEISLGDFILTGGEMACIPIVDSICRLIPGVLGKNESFMEESFYEGLLEYPHYTRPENFKGKEVPKILLSGHHENIRKWRKSKSLKITKKRRPDLFKKYNLTKEDEKLLSSEE.

S-adenosyl-L-methionine-binding positions include Gly112 and 131-136; that span reads LGDFIL.

This sequence belongs to the RNA methyltransferase TrmD family. In terms of assembly, homodimer.

It is found in the cytoplasm. The enzyme catalyses guanosine(37) in tRNA + S-adenosyl-L-methionine = N(1)-methylguanosine(37) in tRNA + S-adenosyl-L-homocysteine + H(+). Its function is as follows. Specifically methylates guanosine-37 in various tRNAs. The protein is tRNA (guanine-N(1)-)-methyltransferase of Clostridium tetani (strain Massachusetts / E88).